The sequence spans 93 residues: MKTLVLLSALVLLAFQVQADPIQNTDEETKTEEQPGEDDQAVSVSFGDPEGSSLQEESLRDLVCYCRKRGCKRREHINGTCRKGHLLYMLCCR.

Positions 1–19 (MKTLVLLSALVLLAFQVQA) are cleaved as a signal peptide. Positions 20 to 58 (DPIQNTDEETKTEEQPGEDDQAVSVSFGDPEGSSLQEES) are excised as a propeptide. Positions 23–56 (QNTDEETKTEEQPGEDDQAVSVSFGDPEGSSLQE) are disordered. Cystine bridges form between Cys-64–Cys-92, Cys-66–Cys-81, and Cys-71–Cys-91.

The protein belongs to the alpha-defensin family. As to expression, paneth cells of the small bowel.

It is found in the secreted. Its function is as follows. Probably contributes to the antimicrobial barrier function of the small bowel mucosa. The sequence is that of Alpha-defensin 15 (Defa15) from Mus musculus (Mouse).